A 94-amino-acid chain; its full sequence is Acylphosphatase (94 aa).

One can recognise an Acylphosphatase-like domain in the interval 8–94 (RLTAWVHGRV…REQITGFHER (87 aa)). Active-site residues include Arg23 and Asn41.

This sequence belongs to the acylphosphatase family.

It carries out the reaction an acyl phosphate + H2O = a carboxylate + phosphate + H(+). The chain is Acylphosphatase (acyP) from Mycobacterium sp. (strain KMS).